Here is a 555-residue protein sequence, read N- to C-terminus: Urocanate hydratase (555 aa).

Residues 51–52 (GG), Gln-129, 175–177 (GMG), Glu-195, 241–242 (NA), 262–266 (QTSAH), 272–273 (YL), and Tyr-321 contribute to the NAD(+) site. Residue Cys-409 is part of the active site. Gly-491 contributes to the NAD(+) binding site.

This sequence belongs to the urocanase family. Requires NAD(+) as cofactor.

It is found in the cytoplasm. It catalyses the reaction 4-imidazolone-5-propanoate = trans-urocanate + H2O. The protein operates within amino-acid degradation; L-histidine degradation into L-glutamate; N-formimidoyl-L-glutamate from L-histidine: step 2/3. Its function is as follows. Catalyzes the conversion of urocanate to 4-imidazolone-5-propionate. In Hyphomonas neptunium (strain ATCC 15444), this protein is Urocanate hydratase.